The sequence spans 682 residues: Inactive protein-arginine deiminase type-6 (682 aa).

A phosphoserine mark is found at Ser-2 and Ser-434.

The protein belongs to the protein arginine deiminase family. As to quaternary structure, homodimers. Associates with alpha-tubulin. Post-translationally, phosphorylation at Ser-2, possibly by RSK-type kinases, and Ser-434 creates binding sites for 14-3-3 proteins. In terms of tissue distribution, expressed at very high levels in oocytes. Weakly expressed in testis. Expressed in primordial, primary, secondary and Graafian follicles, and in immature oocytes, mature eggs and blastocyst (at protein level).

Its subcellular location is the cytoplasm. It localises to the nucleus. The protein localises to the cytoplasmic vesicle. The protein resides in the secretory vesicle. It is found in the cortical granule. Structural constituent of cytoplasmic lattices, which plays a key role in early embryonic development. Cytoplasmic lattices consist in fibrous structures found in the cytoplasm of oocytes and preimplantation embryos. They are required to store maternal proteins critical for embryonic development, such as ribosomal proteins and proteins that control epigenetic reprogramming of the preimplantation embryo, and prevent their degradation or activation. In contrast to other members of the family, does not show protein-arginine deiminase activity due to its inability to bind Ca(2+). The sequence is that of Inactive protein-arginine deiminase type-6 from Mus musculus (Mouse).